We begin with the raw amino-acid sequence, 474 residues long: MSVARTGKVVQVVGPVVDVRFEGELPNILNALHMVRNGERLVLEVATHMGEGTVRAIAMDSTDGVVRGMEVTDTGDTIRVPVGRQTLGRILNVVGEPQDEKGPVETTETLPIHRPAPAFAQQATSAEILETGIKVIDLLAPYAKGGKVGLFGGAGVGKTVLIMELINNVAQEHGGYSVFAGVGERTREGNDLYHEMAESGVIDPNSWENSKAALIYGQMNEPPGARARVALTGLTVAEYFRDLGGQDVLFFVDNIFRFTQAGAEVSALLGRIPSAVGYQPTLGTDMGALQERITTTKTGSITSVQAVYVPADDLTDPAPATTFSHLDATTVLNRAISEMGIYPAVDPLDSTSRVLDPKVVGEEHYHTAREVQRILQTYKSLQDIIAILGMDELSEEDKLVVNRARKIQRFLSQPFHVAEVFTGTKGVYVPVKKTVQGFKELCEGKYDNVPEAAFYMVSDIDAALAKAEKLKAAS.

152-159 (GGAGVGKT) is a binding site for ATP.

The protein belongs to the ATPase alpha/beta chains family. F-type ATPases have 2 components, CF(1) - the catalytic core - and CF(0) - the membrane proton channel. CF(1) has five subunits: alpha(3), beta(3), gamma(1), delta(1), epsilon(1). CF(0) has three main subunits: a(1), b(2) and c(9-12). The alpha and beta chains form an alternating ring which encloses part of the gamma chain. CF(1) is attached to CF(0) by a central stalk formed by the gamma and epsilon chains, while a peripheral stalk is formed by the delta and b chains.

It localises to the cell inner membrane. It carries out the reaction ATP + H2O + 4 H(+)(in) = ADP + phosphate + 5 H(+)(out). Its function is as follows. Produces ATP from ADP in the presence of a proton gradient across the membrane. The catalytic sites are hosted primarily by the beta subunits. The sequence is that of ATP synthase subunit beta from Magnetococcus marinus (strain ATCC BAA-1437 / JCM 17883 / MC-1).